The sequence spans 386 residues: 5-amino-6-(D-ribitylamino)uracil--L-tyrosine 4-hydroxyphenyl transferase (386 aa).

The region spanning 56 to 303 (VSYVINRNLN…MAVARLYLGD (248 aa)) is the Radical SAM core domain. 3 residues coordinate [4Fe-4S] cluster: cysteine 70, cysteine 74, and cysteine 77.

This sequence belongs to the radical SAM superfamily. CofH family. As to quaternary structure, consists of two subunits, CofG and CofH. It depends on [4Fe-4S] cluster as a cofactor.

The enzyme catalyses 5-amino-6-(D-ribitylamino)uracil + L-tyrosine + S-adenosyl-L-methionine = 5-amino-5-(4-hydroxybenzyl)-6-(D-ribitylimino)-5,6-dihydrouracil + 2-iminoacetate + 5'-deoxyadenosine + L-methionine + H(+). The protein operates within cofactor biosynthesis; coenzyme F0 biosynthesis. Its function is as follows. Catalyzes the radical-mediated synthesis of 5-amino-5-(4-hydroxybenzyl)-6-(D-ribitylimino)-5,6-dihydrouracil from 5-amino-6-(D-ribitylamino)uracil and L-tyrosine. The protein is 5-amino-6-(D-ribitylamino)uracil--L-tyrosine 4-hydroxyphenyl transferase of Synechococcus elongatus (strain ATCC 33912 / PCC 7942 / FACHB-805) (Anacystis nidulans R2).